A 324-amino-acid polypeptide reads, in one-letter code: Putative HTH-type transcriptional regulatory protein UNCMA_15260 (324 aa).

Residues 132–189 (LRSLREAKNISLGELAMALGVSRRTISKYESGMNATIEAALKLEEILDAPIACPVNMI) form the HTH cro/C1-type domain. A DNA-binding region (H-T-H motif) is located at residues 143–162 (LGELAMALGVSRRTISKYES).

This Methanocella arvoryzae (strain DSM 22066 / NBRC 105507 / MRE50) protein is Putative HTH-type transcriptional regulatory protein UNCMA_15260.